A 114-amino-acid polypeptide reads, in one-letter code: Large ribosomal subunit protein uL18 (114 aa).

This sequence belongs to the universal ribosomal protein uL18 family. Part of the 50S ribosomal subunit; part of the 5S rRNA/L5/L18/L25 subcomplex. Contacts the 5S and 23S rRNAs.

This is one of the proteins that bind and probably mediate the attachment of the 5S RNA into the large ribosomal subunit, where it forms part of the central protuberance. In Parabacteroides distasonis (strain ATCC 8503 / DSM 20701 / CIP 104284 / JCM 5825 / NCTC 11152), this protein is Large ribosomal subunit protein uL18.